The chain runs to 328 residues: Probable cell division protein WhiA (328 aa).

Residues S275–E308 constitute a DNA-binding region (H-T-H motif).

Belongs to the WhiA family.

Functionally, involved in cell division and chromosome segregation. The sequence is that of Probable cell division protein WhiA from Nocardioides sp. (strain ATCC BAA-499 / JS614).